The following is a 120-amino-acid chain: MADEKEQQGEQGYQLQSQHFYKIITSYMPESFEQDAVQIALIAVDKYRQLKDIAFYIKHEYDKKYPGSGKATEGVYHCIVGKSFASAVSHETRQFIHMKVDTYHVILWKSKDTPFTPGGE.

It belongs to the dynein light chain family. As to quaternary structure, consists of at least 3 heavy chains (alpha, beta and gamma), 2 intermediate chains and 8 light chains.

Its subcellular location is the cytoplasm. The protein localises to the cytoskeleton. The protein resides in the flagellum axoneme. The polypeptide is Dynein 11 kDa light chain, flagellar outer arm (Chlamydomonas reinhardtii (Chlamydomonas smithii)).